The chain runs to 476 residues: Ovarian-specific serine/threonine-protein kinase Lok (476 aa).

Residues 69–129 form the FHA domain; sequence FTAGRGEAND…NGTFVNNEKI (61 aa). One can recognise a Protein kinase domain in the interval 174–441; sequence YYVNRKLGSG…IDDVLQSSWL (268 aa). ATP is bound by residues 180-188 and Lys203; that span reads LGSGAYGLV. The active-site Proton acceptor is the Asp303.

This sequence belongs to the protein kinase superfamily. CAMK Ser/Thr protein kinase family. CDS1 subfamily. In terms of tissue distribution, in stage 3 embryos, both isoforms are expressed in both somatic and pole cell nuclei. Expression in pole cell nuclei is sustained until stage 9 and weakly expressed after pole cell invagination into the abdominal cavity.

Its subcellular location is the nucleus speckle. The catalysed reaction is L-seryl-[protein] + ATP = O-phospho-L-seryl-[protein] + ADP + H(+). The enzyme catalyses L-threonyl-[protein] + ATP = O-phospho-L-threonyl-[protein] + ADP + H(+). In terms of biological role, may have a role in germline establishment. The sequence is that of Ovarian-specific serine/threonine-protein kinase Lok (lok) from Drosophila melanogaster (Fruit fly).